The chain runs to 284 residues: Homeobox protein Hox-D13 (284 aa).

A DNA-binding region (homeobox) is located at residues 217–276; it reads GRKKRVPYTKTQLKELEREYATNKFITKEKRRRISTATNLTERQVTIWFQNRRVKEKKVV.

Belongs to the Abd-B homeobox family.

It is found in the nucleus. Its function is as follows. Sequence-specific transcription factor that binds gene promoters and activates their transcription. Part of a developmental regulatory system that provides cells with specific positional identities on the anterior-posterior axis. This Heterodontus francisci (Horn shark) protein is Homeobox protein Hox-D13 (HOXD13).